An 87-amino-acid chain; its full sequence is MAHHKSAIKRIKQNAKKNARNRHISSTLKTYIKRVREAVEAKDKEAATVALKAAIPVIDKTATKGVIHSSNASRTVSRLTKLVNTLG.

Residues 1 to 22 form a disordered region; the sequence is MAHHKSAIKRIKQNAKKNARNR.

The protein belongs to the bacterial ribosomal protein bS20 family.

In terms of biological role, binds directly to 16S ribosomal RNA. In Pelobacter propionicus (strain DSM 2379 / NBRC 103807 / OttBd1), this protein is Small ribosomal subunit protein bS20.